We begin with the raw amino-acid sequence, 83 residues long: Putative defensin-like protein 257 (83 aa).

Residues 1–25 (MMNVSLKLSFLVFILVIMSNLGSEA) form the signal peptide. Intrachain disulfides connect Cys-57-Cys-73, Cys-63-Cys-80, and Cys-67-Cys-82.

It belongs to the DEFL family.

Its subcellular location is the secreted. In Arabidopsis thaliana (Mouse-ear cress), this protein is Putative defensin-like protein 257.